The chain runs to 271 residues: Mannosyl-3-phosphoglycerate phosphatase (271 aa).

Catalysis depends on aspartate 13, which acts as the Nucleophile. The Mg(2+) site is built by aspartate 13, aspartate 15, and aspartate 214.

The protein belongs to the HAD-like hydrolase superfamily. MPGP family. It depends on Mg(2+) as a cofactor.

The protein resides in the cytoplasm. The enzyme catalyses 2-O-(alpha-D-mannosyl)-3-phosphoglycerate + H2O = (2R)-2-O-(alpha-D-mannosyl)-glycerate + phosphate. In Shigella sonnei (strain Ss046), this protein is Mannosyl-3-phosphoglycerate phosphatase (yedP).